The sequence spans 396 residues: MSVAFASARPRGKGEVTQQTIQKMLDENHHLIQCILEYQSKGKTAECTQYQQILHRNLVYLATIADSNQNMQSLLPAPPTQNMNLGPGALTQSGSSQGLHSQGSLSDAISTGLPPSSLLQGQIGNGPSHVSMQQTAPNTLPTTSMSISGPGYSHAGPASQGVPMQGQGTIGNYVSRTNINMQSNPVSMMQQQAATSHYSSAQGGSQHYQGQSSIAMMGQGSQGSSMMGQRPMAPYRPSQQGSSQQYLGQEEYYGEQYSHSQGAAEPMGQQYYPDGHGDYAYQQSSYTEQSYDRSFEESTQHYYEGGNSQYSQQQAGYQQGAAQQQTYSQQQYPSQQSYPGQQQGYGSAQGAPSQYPGYQQGQGQQYGSYRAPQTAPSAQQQRPYGYEQGQYGNYQQ.

The N-terminal auto-inhibitory domain; necessary for interaction with SMARCA4/BRG1 stretch occupies residues 1 to 148 (MSVAFASARP…TLPTTSMSIS (148 aa)). The short motif at 50–53 (YQQI) is the SH2-binding element. 3 disordered regions span residues 72-162 (QSLL…SQGV), 192-280 (QAAT…GDYA), and 311-396 (SQQQ…NYQQ). A compositionally biased stretch (low complexity) spans 90–106 (LTQSGSSQGLHSQGSLS). 2 stretches are compositionally biased toward polar residues: residues 107–122 (DAIS…LQGQ) and 128–147 (SHVS…SMSI). Residues 149–232 (GPGYSHAGPA…GSSMMGQRPM (84 aa)) form a methionine-rich intra-molecular domain region. Composition is skewed to low complexity over residues 199 to 229 (SSAQ…MMGQ), 238 to 261 (SQQG…SHSQ), and 311 to 369 (SQQQ…YGSY). The tract at residues 246 to 317 (YLGQEEYYGE…SQYSQQQAGY (72 aa)) is MFD domain. Residues 334 to 396 (SQQSYPGQQQ…EQGQYGNYQQ (63 aa)) are necessary for nuclear localization. Positions 353–356 (SQYP) match the SH2-binding motif. Residues 371-379 (APQTAPSAQ) carry the SH3-binding motif. Positions 384 to 396 (YGYEQGQYGNYQQ) are enriched in low complexity. Residues 387 to 396 (EQGQYGNYQQ) form a necessary for interaction with CREBBP and for the recruitment of CREBBP to the nuclear bodies region. The short motif at 391–394 (YGNY) is the SH2-binding element.

This sequence belongs to the SS18 family. Homodimer. Dimerization may be necessary for its function in neuronal dendritic development. Interacts (via C-terminus) with CREBBP (via N-terminus), EP300 and SMARCA4/BRG1. Interacts with the nBAF complex. Association with CREBBP facilitates transcription while the association with SMARCA4/BRG1 suppresses CREST-mediated transcription in resting neurons. Ubiquitous; with lowest levels in spleen.

It is found in the nucleus. The protein resides in the chromosome. The protein localises to the centromere. Its subcellular location is the kinetochore. Its function is as follows. Transcriptional activator which is required for calcium-dependent dendritic growth and branching in cortical neurons. Recruits CREB-binding protein (CREBBP) to nuclear bodies. Component of the CREST-BRG1 complex, a multiprotein complex that regulates promoter activation by orchestrating a calcium-dependent release of a repressor complex and a recruitment of an activator complex. In resting neurons, transcription of the c-FOS promoter is inhibited by BRG1-dependent recruitment of a phospho-RB1-HDAC1 repressor complex. Upon calcium influx, RB1 is dephosphorylated by calcineurin, which leads to release of the repressor complex. At the same time, there is increased recruitment of CREBBP to the promoter by a CREST-dependent mechanism, which leads to transcriptional activation. The CREST-BRG1 complex also binds to the NR2B promoter, and activity-dependent induction of NR2B expression involves a release of HDAC1 and recruitment of CREBBP. This Homo sapiens (Human) protein is Calcium-responsive transactivator (SS18L1).